Here is a 363-residue protein sequence, read N- to C-terminus: Transcriptional regulator AacuR (363 aa).

Residues Met1–Arg24 form a disordered region. Residues Cys27 to Cys54 constitute a DNA-binding region (zn(2)-C6 fungal-type). Residues Arg63 to His72 are compositionally biased toward basic residues. Residues Arg63–Lys104 are disordered. Positions Ile76–Ser102 are enriched in low complexity.

Its subcellular location is the nucleus. Functionally, transcriptional regulator; part of the gene cluster that mediates the biosynthesis of the tetrahydroxanthone dimer secalonic acid D. The protein is Transcriptional regulator AacuR of Aspergillus aculeatus (strain ATCC 16872 / CBS 172.66 / WB 5094).